Consider the following 371-residue polypeptide: Chaperone protein DnaJ (371 aa).

In terms of domain architecture, J spans 5 to 69 (DYYEILGIAK…QKRAAYDQHG (65 aa)). The segment at 127–205 (GASKEIHITT…CRGQGKVEEP (79 aa)) adopts a CR-type zinc-finger fold. Zn(2+)-binding residues include C140, C143, C157, C160, C179, C182, C193, and C196. 4 CXXCXGXG motif repeats span residues 140 to 147 (CEHCKGSG), 157 to 164 (CTTCRGVG), 179 to 186 (CPRCHGQG), and 193 to 200 (CRQCRGQG).

This sequence belongs to the DnaJ family. Homodimer. The cofactor is Zn(2+).

It is found in the cytoplasm. Participates actively in the response to hyperosmotic and heat shock by preventing the aggregation of stress-denatured proteins and by disaggregating proteins, also in an autonomous, DnaK-independent fashion. Unfolded proteins bind initially to DnaJ; upon interaction with the DnaJ-bound protein, DnaK hydrolyzes its bound ATP, resulting in the formation of a stable complex. GrpE releases ADP from DnaK; ATP binding to DnaK triggers the release of the substrate protein, thus completing the reaction cycle. Several rounds of ATP-dependent interactions between DnaJ, DnaK and GrpE are required for fully efficient folding. Also involved, together with DnaK and GrpE, in the DNA replication of plasmids through activation of initiation proteins. The chain is Chaperone protein DnaJ from Hamiltonella defensa subsp. Acyrthosiphon pisum (strain 5AT).